Here is a 343-residue protein sequence, read N- to C-terminus: MDDNKTRALTAALGQIEKQFGKGAIMRLGDNQAMDIEAISTGSLTIDIALGIGGLPCGRVVEIYGPESSGKTTLTLQAIAEAQKMGKTCAFVDAEHALDPIYAGKLGVNIDDLLVSQPDTGEQALEICDMLVRSGAVDVVVVDSVAALTPKAEIEGDMGDSHVGLQARLMSQALRKLTGNIKRSNTLVIFINQIRMKIGVMFGSPETTTGGNALKFYASVRLDIRRIGAIKDGDEVVGNETRVKVVKNKVAPPFKQAEFQIMYGQGICKEAELIDLGVKQKLVEKAGAWYSYNGERIGQGKANVVKYLKEHTEMSNDIEQKLRAELLLKKTVKAEEPAKADEE.

Residue 65–72 participates in ATP binding; that stretch reads GPESSGKT.

The protein belongs to the RecA family.

It is found in the cytoplasm. Its function is as follows. Can catalyze the hydrolysis of ATP in the presence of single-stranded DNA, the ATP-dependent uptake of single-stranded DNA by duplex DNA, and the ATP-dependent hybridization of homologous single-stranded DNAs. It interacts with LexA causing its activation and leading to its autocatalytic cleavage. This chain is Protein RecA, found in Pseudoalteromonas atlantica (strain T6c / ATCC BAA-1087).